The sequence spans 394 residues: Elongation factor Tu (394 aa).

The tr-type G domain occupies 10 to 204; the sequence is KPHVNIGTIG…AVDEYIPTPD (195 aa). A G1 region spans residues 19 to 26; it reads GHIDHGKT. Position 19–26 (19–26) interacts with GTP; the sequence is GHIDHGKT. Thr-26 is a Mg(2+) binding site. The segment at 60–64 is G2; the sequence is GITIN. The segment at 81 to 84 is G3; that stretch reads DCPG. GTP contacts are provided by residues 81–85 and 136–139; these read DCPGH and NKCD. Residues 136 to 139 are G4; that stretch reads NKCD. The G5 stretch occupies residues 174–176; it reads SAL.

Belongs to the TRAFAC class translation factor GTPase superfamily. Classic translation factor GTPase family. EF-Tu/EF-1A subfamily. As to quaternary structure, monomer.

It is found in the cytoplasm. It carries out the reaction GTP + H2O = GDP + phosphate + H(+). Its function is as follows. GTP hydrolase that promotes the GTP-dependent binding of aminoacyl-tRNA to the A-site of ribosomes during protein biosynthesis. This chain is Elongation factor Tu, found in Mycoplasmoides gallisepticum (strain R(low / passage 15 / clone 2)) (Mycoplasma gallisepticum).